The sequence spans 215 residues: Urease accessory protein UreG (215 aa).

A GTP-binding site is contributed by 24–31 (GPVGSGKT).

This sequence belongs to the SIMIBI class G3E GTPase family. UreG subfamily. Homodimer. UreD, UreF and UreG form a complex that acts as a GTP-hydrolysis-dependent molecular chaperone, activating the urease apoprotein by helping to assemble the nickel containing metallocenter of UreC. The UreE protein probably delivers the nickel.

It localises to the cytoplasm. Facilitates the functional incorporation of the urease nickel metallocenter. This process requires GTP hydrolysis, probably effectuated by UreG. The chain is Urease accessory protein UreG from Burkholderia orbicola (strain MC0-3).